The sequence spans 326 residues: tRNA uridine(34) hydroxylase (326 aa).

Residues 123–217 (SDPEVLLIDT…YLEEVKPEES (95 aa)) form the Rhodanese domain. Cys-177 serves as the catalytic Cysteine persulfide intermediate. The disordered stretch occupies residues 293–326 (KSRGESHIGSDVKQVIEARRQDKVERKQRQHQEG).

This sequence belongs to the TrhO family.

It carries out the reaction uridine(34) in tRNA + AH2 + O2 = 5-hydroxyuridine(34) in tRNA + A + H2O. Catalyzes oxygen-dependent 5-hydroxyuridine (ho5U) modification at position 34 in tRNAs. The chain is tRNA uridine(34) hydroxylase from Shewanella loihica (strain ATCC BAA-1088 / PV-4).